Reading from the N-terminus, the 219-residue chain is Probable GTP-binding protein EngB (219 aa).

The EngB-type G domain occupies 31–205 (VGVEIAFAGR…LSILNEWCHP (175 aa)). GTP is bound by residues 39–46 (GRSNAGKS), 66–70 (GRTQL), 84–87 (DLPG), 151–154 (TKSD), and 184–186 (FSA). Mg(2+) contacts are provided by Ser-46 and Thr-68.

Belongs to the TRAFAC class TrmE-Era-EngA-EngB-Septin-like GTPase superfamily. EngB GTPase family. Mg(2+) is required as a cofactor.

In terms of biological role, necessary for normal cell division and for the maintenance of normal septation. This is Probable GTP-binding protein EngB from Shewanella sp. (strain ANA-3).